We begin with the raw amino-acid sequence, 336 residues long: UDP-N-acetylmuramoylpentapeptide-lysine N(6)-alanyltransferase (336 aa).

Residues 37 to 40 (KNNW), tyrosine 104, arginine 212, tyrosine 216, and tyrosine 257 contribute to the substrate site.

This sequence belongs to the FemABX family.

The enzyme catalyses UDP-N-acetyl-alpha-D-muramoyl-L-alanyl-gamma-D-glutamyl-L-lysyl-D-alanyl-D-alanine + L-alanyl-tRNA(Ala) = UDP-N-acetyl-alpha-D-muramoyl-L-alanyl-gamma-D-glutamyl-N(6)-(L-alanyl)-L-lysyl-D-alanyl-D-alanine + tRNA(Ala) + H(+). Its function is as follows. Involved in the synthesis of the bacterial cell wall. Catalyzes the addition of alanine into the interchain peptide bridge of peptidoglycan precursor using aminoacyl-tRNA(Ala) as amino acid donor. This alanine is added to the epsilon-amino group of the L-lysine of the peptidoglycan UDP-N-acetyl-alpha-D-muramoyl-L-alanyl-D-glutamyl-L-lysyl-D-alanyl-D-alanine, in a ribosome-independent mechanism. Specific for UDP-N-acetyl-muramoyl-pentapeptide. Has no activity toward UDP-N-acetyl-muramoyl-tetrapeptide or UDP-N-acetyl-muramoyl-tripeptide. Also acts on L-seryl-tRNA(Ser). The protein is UDP-N-acetylmuramoylpentapeptide-lysine N(6)-alanyltransferase of Weissella viridescens (Lactobacillus viridescens).